A 607-amino-acid chain; its full sequence is UvrABC system protein C (607 aa).

The GIY-YIG domain occupies Ala-16 to Ile-94. In terms of domain architecture, UVR spans Gln-203–Val-238.

Belongs to the UvrC family. In terms of assembly, interacts with UvrB in an incision complex.

It localises to the cytoplasm. In terms of biological role, the UvrABC repair system catalyzes the recognition and processing of DNA lesions. UvrC both incises the 5' and 3' sides of the lesion. The N-terminal half is responsible for the 3' incision and the C-terminal half is responsible for the 5' incision. In Pseudomonas putida (strain W619), this protein is UvrABC system protein C.